A 582-amino-acid polypeptide reads, in one-letter code: 2-isopropylmalate synthase (582 aa).

Positions 40 to 314 (PRWCAVDLRD…DPMIDFSDID (275 aa)) constitute a Pyruvate carboxyltransferase domain. Mg(2+)-binding residues include aspartate 49, histidine 253, histidine 255, and asparagine 289. The segment at 456–582 (SPAGHPGGQW…NRAIRDNQVD (127 aa)) is regulatory domain.

The protein belongs to the alpha-IPM synthase/homocitrate synthase family. LeuA type 2 subfamily. In terms of assembly, homodimer. Requires Mg(2+) as cofactor.

It is found in the cytoplasm. It carries out the reaction 3-methyl-2-oxobutanoate + acetyl-CoA + H2O = (2S)-2-isopropylmalate + CoA + H(+). It functions in the pathway amino-acid biosynthesis; L-leucine biosynthesis; L-leucine from 3-methyl-2-oxobutanoate: step 1/4. In terms of biological role, catalyzes the condensation of the acetyl group of acetyl-CoA with 3-methyl-2-oxobutanoate (2-ketoisovalerate) to form 3-carboxy-3-hydroxy-4-methylpentanoate (2-isopropylmalate). This chain is 2-isopropylmalate synthase, found in Renibacterium salmoninarum (strain ATCC 33209 / DSM 20767 / JCM 11484 / NBRC 15589 / NCIMB 2235).